The following is a 970-amino-acid chain: MDAAEPGLPPGPEGRKRYSDIFRSLDNLEISLGNVTLEMLAGDPLLSEDPEPDKTPTATVTNEASCWSGPSPEGPVPLTGEELDLRLIRTKGGVDAALEYAKTWSRYAKELLAWTEKRASYELEFAKSTMKIAEAGKVSIQQQSHMPLQYIYTLFLEHDLSLGTLAMETVAQQKRDYYQPLAAKRTEIEKWRKEFKEQWMKEQKRMNEAVQALRRAQLQYVQRSEDLRARSQGSPEDSAPQASPGPSKQQERRRRSREEAQAKAQEAEALYQACVREANARQQDLEIAKQRIVSHVRKLVFQGDEVLRRVTLSLFGLRGAQAERGPRAFAALAECCAPFEPGQRYQEFVRALRPEAPPPPPPAFSFQEFLPSLNSSPLDIRKKLSGPLPPRLDENSAEPGPWEDPGTGWRWQGTPGPTPGSDVDSVGGGSESRSLDSPTSSPGAGTRQLVKASSTGTESSDDFEERDPDLGDGLENGLGSPFGKWTLSSAAQTHQLRRLRGPAKCRECEAFMVSGTECEECFLTCHKRCLETLLILCGHRRLPARTPLFGVDFLQLPRDFPEEVPFVVTKCTAEIEHRALDVQGIYRVSGSRVRVERLCQAFENGRALVELSGNSPHDVSSVLKRFLQELTEPVIPFHLYDAFISLAKTLHADPGDDPGTPSPSPEVIRSLKTLLVQLPDSNYNTLRHLVAHLFRVAARFMENKMSANNLGIVFGPTLLRPPDGPRAASAIPVTCLLDSGHQAQLVEFLIVHYEQIFGMDELPQATEPPPQDSSPAPGPLTTSSQPPPPHLDPDSQPPVLASDPGPDPQHHSTLEQHPTATPTEIPTPQSDQREDVAEDTKDGGGEVSSQGPEDSLLGTQSRGHFSRQPVKYPRGGVRPVTHQLSSLALVASKLCEETPITSVPRGSLRGRGPSPAAASPEGSPLRRTPLPKHFEITQETARLLSKLDSEAVPRATCCPDVQPEEAEDHL.

The residue at position 19 (Ser-19) is a Phosphoserine. Disordered regions lie at residues 44–76 (PLLS…EGPV), 224–263 (SEDL…AQAK), and 377–478 (PLDI…ENGL). Polar residues predominate over residues 56–65 (PTATVTNEAS). 6 positions are modified to phosphoserine: Ser-71, Ser-231, Ser-234, Ser-243, Ser-437, and Ser-441. The region spanning 81–344 (EELDLRLIRT…CCAPFEPGQR (264 aa)) is the F-BAR domain. Residues 231–246 (SQGSPEDSAPQASPGP) show a composition bias toward polar residues. Acidic residues predominate over residues 459–472 (SSDDFEERDPDLGD). A Phorbol-ester/DAG-type zinc finger spans residues 493–537 (THQLRRLRGPAKCRECEAFMVSGTECEECFLTCHKRCLETLLILC). In terms of domain architecture, Rho-GAP spans 554-757 (LQLPRDFPEE…FLIVHYEQIF (204 aa)). Residue Thr-660 is modified to Phosphothreonine. Positions 762-878 (LPQATEPPPQ…PVKYPRGGVR (117 aa)) are disordered. Pro residues predominate over residues 766–778 (TEPPPQDSSPAPG). Positions 815–830 (EQHPTATPTEIPTPQS) are enriched in polar residues. Basic and acidic residues predominate over residues 831–844 (DQREDVAEDTKDGG). The span at 847–863 (VSSQGPEDSLLGTQSRG) shows a compositional bias: polar residues. Ser-885, Ser-907, Ser-914, Ser-919, and Ser-923 each carry phosphoserine. The disordered stretch occupies residues 897–932 (ETPITSVPRGSLRGRGPSPAAASPEGSPLRRTPLPK). Residues 910–923 (GRGPSPAAASPEGS) show a composition bias toward low complexity.

In terms of assembly, interacts with GEM through its N-terminal.

In terms of biological role, stimulates, in vitro and in vivo, the GTPase activity of RhoA. The chain is GEM-interacting protein (GMIP) from Homo sapiens (Human).